The chain runs to 315 residues: 31 kDa ribonucleoprotein, chloroplastic (315 aa).

Residues Met-1–Ser-71 constitute a chloroplast transit peptide. The segment at Ala-114 to Pro-133 is disordered. Over residues Gly-115 to Pro-133 the composition is skewed to acidic residues. RRM domains lie at Ala-136–Arg-214 and Tyr-230–Asp-308.

The protein resides in the plastid. It localises to the chloroplast. Functionally, could be involved in splicing and/or processing of chloroplast RNA's. This chain is 31 kDa ribonucleoprotein, chloroplastic, found in Nicotiana sylvestris (Wood tobacco).